A 94-amino-acid polypeptide reads, in one-letter code: Scorpine (94 aa).

A signal peptide spans 1 to 19 (MNSKLTALIFLGLIAIAYC). The BetaSPN-type CS-alpha/beta domain occupies 55-94 (EFQCMANMDMLGNCEKHCQTSGEKGYCHGTKCKCGTPLSY). 3 disulfide bridges follow: C58–C81, C68–C86, and C72–C88.

This sequence belongs to the long chain scorpion toxin family. Class 3 subfamily. Expressed by the venom gland.

The protein resides in the secreted. The protein localises to the target cell membrane. In terms of biological role, this full-length protein shows antibacterial activity against B.subtilis and K.pneumoniae. Also shows a potent inhibitory effect on the ookinete (ED(50) 0.7 uM) and gamete (ED(50) 10 uM) stages of Plasmodium berghei development. In addition, induces cell membrane disruption, leakage currents and cell death on HEK293 cell line (tested at 25 uM). The sequence is that of Scorpine from Pandinus imperator (Emperor scorpion).